A 798-amino-acid polypeptide reads, in one-letter code: Probable DEAD-box ATP-dependent RNA helicase 48 (798 aa).

3 disordered regions span residues 76-100 (KMWG…MSPK), 117-148 (DFWN…NSPI), and 236-257 (FRKN…GKMI). Low complexity predominate over residues 132–148 (GSRSGSDSIDSTSNSPI). Residues 242–252 (STEEDSDEEGD) show a composition bias toward acidic residues. Residues 328 to 356 (KRFDESCISPLTLKALSASGILKMTRVQD) carry the Q motif motif. The 185-residue stretch at 359–543 (LSECLDGKDA…QLVLKRDHSY (185 aa)) folds into the Helicase ATP-binding domain. An ATP-binding site is contributed by 372 to 379 (AKTGTGKS). Positions 491-494 (DEAD) match the DEAD box motif. Residues 577–726 (LLKEHINNTP…SIVKHQVDQS (150 aa)) enclose the Helicase C-terminal domain.

It belongs to the DEAD box helicase family.

The catalysed reaction is ATP + H2O = ADP + phosphate + H(+). The sequence is that of Probable DEAD-box ATP-dependent RNA helicase 48 (RH48) from Arabidopsis thaliana (Mouse-ear cress).